Consider the following 136-residue polypeptide: Ribonuclease P protein component (136 aa).

The protein belongs to the RnpA family. In terms of assembly, consists of a catalytic RNA component (M1 or rnpB) and a protein subunit.

It carries out the reaction Endonucleolytic cleavage of RNA, removing 5'-extranucleotides from tRNA precursor.. Its function is as follows. RNaseP catalyzes the removal of the 5'-leader sequence from pre-tRNA to produce the mature 5'-terminus. It can also cleave other RNA substrates such as 4.5S RNA. The protein component plays an auxiliary but essential role in vivo by binding to the 5'-leader sequence and broadening the substrate specificity of the ribozyme. The sequence is that of Ribonuclease P protein component from Burkholderia mallei (strain NCTC 10247).